Consider the following 217-residue polypeptide: Large ribosomal subunit protein uL3 (217 aa).

A disordered region spans residues 129-161 (SRGPMSHGSKNHRAPGSTGAGTTPGRIYPGKRM). Residues 142–153 (APGSTGAGTTPG) are compositionally biased toward low complexity.

Belongs to the universal ribosomal protein uL3 family. In terms of assembly, part of the 50S ribosomal subunit. Forms a cluster with proteins L14 and L19.

In terms of biological role, one of the primary rRNA binding proteins, it binds directly near the 3'-end of the 23S rRNA, where it nucleates assembly of the 50S subunit. This is Large ribosomal subunit protein uL3 from Prochlorococcus marinus (strain MIT 9515).